A 761-amino-acid chain; its full sequence is Polyribonucleotide nucleotidyltransferase (761 aa).

The Mg(2+) site is built by Asp-532 and Asp-538. The KH domain occupies 598–657 (PRVISVQIPVDKIGELIGPKGKTINAIQDETGADISIDEDGTVYIGAVDGPSAEAARAQV). The 73-residue stretch at 669–741 (GEQFLGTVVK…DRGKLSLAPV (73 aa)) folds into the S1 motif domain.

Belongs to the polyribonucleotide nucleotidyltransferase family. Requires Mg(2+) as cofactor.

It is found in the cytoplasm. It catalyses the reaction RNA(n+1) + phosphate = RNA(n) + a ribonucleoside 5'-diphosphate. Functionally, involved in mRNA degradation. Catalyzes the phosphorolysis of single-stranded polyribonucleotides processively in the 3'- to 5'-direction. This Leifsonia xyli subsp. xyli (strain CTCB07) protein is Polyribonucleotide nucleotidyltransferase.